A 237-amino-acid polypeptide reads, in one-letter code: ATP synthase subunit a (237 aa).

The next 5 helical transmembrane spans lie at 18-38 (LTLL…VYWA), 77-97 (SLFL…GLMA), 114-134 (NIAF…VEGI), 167-187 (LALR…LLVT), and 208-230 (AFSV…MYLG).

This sequence belongs to the ATPase A chain family. F-type ATPases have 2 components, CF(1) - the catalytic core - and CF(0) - the membrane proton channel. CF(1) has five subunits: alpha(3), beta(3), gamma(1), delta(1), epsilon(1). CF(0) has three main subunits: a(1), b(2) and c(9-12). The alpha and beta chains form an alternating ring which encloses part of the gamma chain. CF(1) is attached to CF(0) by a central stalk formed by the gamma and epsilon chains, while a peripheral stalk is formed by the delta and b chains.

The protein resides in the cell membrane. Functionally, key component of the proton channel; it plays a direct role in the translocation of protons across the membrane. The polypeptide is ATP synthase subunit a (Streptococcus gordonii (strain Challis / ATCC 35105 / BCRC 15272 / CH1 / DL1 / V288)).